Reading from the N-terminus, the 507-residue chain is Cysteine--tRNA ligase (507 aa).

Residue C29 coordinates Zn(2+). The short motif at 31–41 (PTVYDVPHIGN) is the 'HIGH' region element. Residues C207, H232, and E236 each coordinate Zn(2+). Residues 265–269 (KMSKS) carry the 'KMSKS' region motif. ATP is bound at residue K268.

Belongs to the class-I aminoacyl-tRNA synthetase family. In terms of assembly, monomer. Zn(2+) is required as a cofactor.

It is found in the cytoplasm. The enzyme catalyses tRNA(Cys) + L-cysteine + ATP = L-cysteinyl-tRNA(Cys) + AMP + diphosphate. The protein is Cysteine--tRNA ligase of Neorickettsia sennetsu (strain ATCC VR-367 / Miyayama) (Ehrlichia sennetsu).